Consider the following 538-residue polypeptide: NADH-quinone oxidoreductase subunit N (538 aa).

A run of 14 helical transmembrane segments spans residues 12 to 32, 47 to 67, 81 to 101, 144 to 164, 170 to 190, 205 to 225, 248 to 268, 294 to 314, 317 to 337, 343 to 363, 371 to 391, 423 to 443, 472 to 492, and 502 to 522; these read IAYGALSPMLIMFGVAVVSVL, LALATVGILGAFVAVVALSGS, PTLYLQGLILVASGLALVVMA, GITQTEIFPLTLFAIAGMMLF, LLTMFVALEVFSLPLYVMCAL, YFLLGAFSSAFFLFGSAFVYG, FLLLGVAMLSVGLLFKVGAVP, IAAFGALLRVLYVALPGITTD, PVLWGVAIATMLIGSIGAVTQ, MLAYSAVAHTGFLLTGVAAAN, LFYLAAYGFSTVGAFIIAGLV, APVLGIVFALFLLAFAGIPLT, SAIAAYFYVRVIVVMFFADPV, and GPAVTVSIAVSALITVLLGVA.

This sequence belongs to the complex I subunit 2 family. In terms of assembly, NDH-1 is composed of 14 different subunits. Subunits NuoA, H, J, K, L, M, N constitute the membrane sector of the complex.

The protein localises to the cell membrane. It catalyses the reaction a quinone + NADH + 5 H(+)(in) = a quinol + NAD(+) + 4 H(+)(out). In terms of biological role, NDH-1 shuttles electrons from NADH, via FMN and iron-sulfur (Fe-S) centers, to quinones in the respiratory chain. The immediate electron acceptor for the enzyme in this species is believed to be a menaquinone. Couples the redox reaction to proton translocation (for every two electrons transferred, four hydrogen ions are translocated across the cytoplasmic membrane), and thus conserves the redox energy in a proton gradient. The polypeptide is NADH-quinone oxidoreductase subunit N (Mycobacteroides abscessus (strain ATCC 19977 / DSM 44196 / CCUG 20993 / CIP 104536 / JCM 13569 / NCTC 13031 / TMC 1543 / L948) (Mycobacterium abscessus)).